A 1074-amino-acid chain; its full sequence is DNA helicase B (1074 aa).

3 disordered regions span residues 1–38, 380–420, and 932–1014; these read MARQ…EEEF, GAKP…HVRS, and GSCA…FDEE. The segment covering 20–38 has biased composition (acidic residues); the sequence is DDEEEDCAQEEEGEQEEEF. Over residues 934–946 the composition is skewed to polar residues; that stretch reads CAPSTGFASQPSS. Phosphoserine occurs at positions 942 and 946. The residue at position 992 (threonine 992) is a Phosphothreonine. 2 positions are modified to phosphoserine: serine 1015 and serine 1026. The Nuclear export signal motif lies at 1022 to 1046; that stretch reads VEAPSPQVSSVFQNMRLNTLTPRQL. The tract at residues 1040-1074 is disordered; sequence TLTPRQLFKPTDNQDTGTAGVADDANDPSNQEMEM.

This sequence belongs to the RecD family. HELB subfamily. As to quaternary structure, binds to RPA1; this interaction promotes HELB recruitment to chromatin following DNA damage. Interacts with at least two subunits of the DNA polymerase alpha complex. Interacts with CDC45. Interacts with TOPB1. Post-translationally, phosphorylated at Ser-942 by CDK2 during the G1/S transition, resulting in its nuclear export into the cytoplasm. As S phase progresses, its exclusion from the nucleus promotes the activation of long-range resection.

Its subcellular location is the nucleus. The protein resides in the cytoplasm. It localises to the chromosome. It catalyses the reaction ATP + H2O = ADP + phosphate + H(+). Functionally, 5'-3' DNA helicase involved in DNA damage response by acting as an inhibitor of DNA end resection. Recruitment to single-stranded DNA (ssDNA) following DNA damage leads to inhibit the nucleases catalyzing resection, such as EXO1, BLM and DNA2, possibly via the 5'-3' ssDNA translocase activity of HELB. As cells approach S phase, DNA end resection is promoted by the nuclear export of HELB following phosphorylation. Acts independently of TP53BP1. Unwinds duplex DNA with 5'-3' polarity. Has single-strand DNA-dependent ATPase and DNA helicase activities. Prefers ATP and dATP as substrates. During S phase, may facilitate cellular recovery from replication stress. The protein is DNA helicase B of Mus musculus (Mouse).